The primary structure comprises 416 residues: Serine hydroxymethyltransferase (416 aa).

Residues Leu-118 and Gly-122–Leu-124 each bind (6S)-5,6,7,8-tetrahydrofolate. Lys-226 is modified (N6-(pyridoxal phosphate)lysine). (6S)-5,6,7,8-tetrahydrofolate is bound by residues Glu-242 and Ser-350 to Phe-352.

The protein belongs to the SHMT family. In terms of assembly, homodimer. Pyridoxal 5'-phosphate is required as a cofactor.

Its subcellular location is the cytoplasm. It catalyses the reaction (6R)-5,10-methylene-5,6,7,8-tetrahydrofolate + glycine + H2O = (6S)-5,6,7,8-tetrahydrofolate + L-serine. It functions in the pathway one-carbon metabolism; tetrahydrofolate interconversion. It participates in amino-acid biosynthesis; glycine biosynthesis; glycine from L-serine: step 1/1. In terms of biological role, catalyzes the reversible interconversion of serine and glycine with tetrahydrofolate (THF) serving as the one-carbon carrier. This reaction serves as the major source of one-carbon groups required for the biosynthesis of purines, thymidylate, methionine, and other important biomolecules. Also exhibits THF-independent aldolase activity toward beta-hydroxyamino acids, producing glycine and aldehydes, via a retro-aldol mechanism. In Helicobacter pylori (strain G27), this protein is Serine hydroxymethyltransferase.